The sequence spans 79 residues: RNA-binding protein KhpA (79 aa).

The 48-residue stretch at 32 to 79 (FLEYHLNLDQSDVGRVIGRKGRTISAIRTIVYSVPTEYKKVRIVIDEK) folds into the KH domain.

Belongs to the KhpA RNA-binding protein family. As to quaternary structure, forms a complex with KhpB. KhpA and KhpB colocalize throughout the cell cycle, with some increase at midcell in dividing cells.

The protein resides in the cytoplasm. A probable RNA chaperone. Forms a complex with KhpB which presumably binds to about 170 cellular RNAs (mRNA, tRNA intergenic RNA and sRNAs); the proteins alone each bind the same set of RNAs. A mutation in this gene suppresses the requirement for PBP2b (penA, a transpeptidase) in peripheral peptidoglycan (PG) synthesis. Probably plays a role in PG homeostasis and regulating peripheral PG synthesis. This Streptococcus pneumoniae serotype 2 (strain D39 / NCTC 7466) protein is RNA-binding protein KhpA.